We begin with the raw amino-acid sequence, 1693 residues long: Putative stoned B-like protein (1693 aa).

A compositionally biased stretch (basic and acidic residues) spans 1 to 12 (MSWRDRDFDPHG). Disordered stretches follow at residues 1 to 54 (MSWR…ELPA), 222 to 322 (NQIP…VEKS), 334 to 371 (TVEI…PTFS), 383 to 438 (KEMT…DPNA), 585 to 807 (GDYH…TSAA), 841 to 869 (KKME…DEED), and 899 to 1024 (PVKE…FVAD). Low complexity predominate over residues 26-39 (SSSERAASMRAMRS). Basic and acidic residues-rich tracts occupy residues 279-301 (MEDK…KEET) and 311-322 (TTEKHQNEVEKS). Over residues 360–371 (EEEEDDDLPTFS) the composition is skewed to acidic residues. The span at 393-412 (ENVENEKQEDTHISEGHVEY) shows a compositional bias: basic and acidic residues. Positions 596-615 (DENSTSAISGYEQNGASTSL) are enriched in polar residues. Over residues 632–643 (YYQGQEYQQEYY) the composition is skewed to low complexity. Positions 684–686 (DPF) match the DPF 1 motif. Positions 708–722 (SPTPEASSSTGTSAP) are enriched in low complexity. Residues 745-760 (PPRPPPAARPPPPRPA) show a composition bias toward pro residues. The span at 786–807 (KVSTAVKSTESTLKNLEETSAA) shows a compositional bias: polar residues. Residues 899 to 913 (PVKEIKKAPEIRRVD) are compositionally biased toward basic and acidic residues. Short sequence motifs (DPF) lie at residues 1006-1008 (DPF), 1024-1026 (DPF), and 1039-1041 (DPF). Residues 1062-1095 (ANAENEDDFYNGRQSPTLSTPTPEGGSPISQQRP) are disordered. Residues 1073–1095 (GRQSPTLSTPTPEGGSPISQQRP) are compositionally biased toward polar residues. An SHD domain is found at 1136–1283 (GWDLMVRHPI…KCKITRTAKP (148 aa)). Positions 1287–1606 (QDEVQIHCYD…AKYQYKVEID (320 aa)) constitute an MHD domain. The interval 1633–1693 (ELHQPTFNPS…IQIDMKNYGY (61 aa)) is disordered. The span at 1637–1651 (PTFNPSTQESDTQQG) shows a compositional bias: polar residues.

Belongs to the Stoned B family.

The protein localises to the cytoplasm. Potential adapter protein, which may be involved in endocytic vesicle recycling of synaptic vesicles. This is Putative stoned B-like protein (unc-41) from Caenorhabditis elegans.